Reading from the N-terminus, the 312-residue chain is E3 ubiquitin-protein ligase RNF126-B (312 aa).

C13, C16, C29, and C32 together coordinate Zn(2+). The C4-type zinc-finger motif lies at 13–32 (CHSCTAEITPRLPEYTCPRC). Disordered stretches follow at residues 41 to 63 (PETS…NRPS) and 96 to 139 (GTSG…RNEG). A compositionally biased stretch (low complexity) spans 44 to 55 (SRNSESNSSNNS). The segment covering 102–115 (EETRDGESRREHQS) has biased composition (basic and acidic residues). Residues 124 to 134 (PRARMSTRRGA) are compositionally biased toward basic residues. The segment at 228-269 (CPVCKEDYTVGESVRQLPCNHLFHNDCIIPWLEQHDTCPVCR) adopts an RING-type zinc-finger fold. The tract at residues 275–312 (QNTATNPPGLTDMTFSSSSTSSSSSTSPTDENNTANNS) is disordered. Low complexity predominate over residues 290-301 (SSSSTSSSSSTS). Residues 302–312 (PTDENNTANNS) are compositionally biased toward polar residues.

It localises to the cytoplasm. The protein resides in the nucleus. The catalysed reaction is S-ubiquitinyl-[E2 ubiquitin-conjugating enzyme]-L-cysteine + [acceptor protein]-L-lysine = [E2 ubiquitin-conjugating enzyme]-L-cysteine + N(6)-ubiquitinyl-[acceptor protein]-L-lysine.. The protein operates within protein modification; protein ubiquitination. E3 ubiquitin-protein ligase that mediates ubiquitination oF target proteins. Depending on the associated E2 ligase, mediates 'Lys-27'-, 'Lys-29'-, 'Lys-48'- and/or 'Lys-63'-linked polyubiquitination of substrates. Part of a BAG6-dependent quality control process ensuring that proteins of the secretory pathway that are mislocalized to the cytosol are degraded by the proteasome. Probably acts by providing the ubiquitin ligase activity associated with the BAG6 complex and be responsible for ubiquitination of the hydrophobic mislocalized proteins and their targeting to the proteasome. This is E3 ubiquitin-protein ligase RNF126-B from Xenopus laevis (African clawed frog).